The sequence spans 352 residues: DNA-directed RNA polymerase subunit alpha (352 aa).

The alpha N-terminal domain (alpha-NTD) stretch occupies residues 1–236; the sequence is MTVNIRNWQE…DQLQVFVHFE (236 aa). The interval 257-352 is alpha C-terminal domain (alpha-CTD); that stretch reads SDVNQLNRFL…AKKLEQELLG (96 aa).

It belongs to the RNA polymerase alpha chain family. As to quaternary structure, homodimer. The RNAP catalytic core consists of 2 alpha, 1 beta, 1 beta' and 1 omega subunit. When a sigma factor is associated with the core the holoenzyme is formed, which can initiate transcription.

It carries out the reaction RNA(n) + a ribonucleoside 5'-triphosphate = RNA(n+1) + diphosphate. Functionally, DNA-dependent RNA polymerase catalyzes the transcription of DNA into RNA using the four ribonucleoside triphosphates as substrates. The chain is DNA-directed RNA polymerase subunit alpha from Sphingopyxis alaskensis (strain DSM 13593 / LMG 18877 / RB2256) (Sphingomonas alaskensis).